Reading from the N-terminus, the 182-residue chain is Adenine phosphoribosyltransferase (182 aa).

It belongs to the purine/pyrimidine phosphoribosyltransferase family. In terms of assembly, homodimer.

Its subcellular location is the cytoplasm. It catalyses the reaction AMP + diphosphate = 5-phospho-alpha-D-ribose 1-diphosphate + adenine. It participates in purine metabolism; AMP biosynthesis via salvage pathway; AMP from adenine: step 1/1. Catalyzes a salvage reaction resulting in the formation of AMP, that is energically less costly than de novo synthesis. The sequence is that of Adenine phosphoribosyltransferase from Campylobacter jejuni subsp. jejuni serotype O:2 (strain ATCC 700819 / NCTC 11168).